Here is a 483-residue protein sequence, read N- to C-terminus: Uroporphyrinogen-III C-methyltransferase (483 aa).

This sequence belongs to the precorrin methyltransferase family.

It catalyses the reaction uroporphyrinogen III + 2 S-adenosyl-L-methionine = precorrin-2 + 2 S-adenosyl-L-homocysteine + H(+). This is Uroporphyrinogen-III C-methyltransferase (nasF) from Bacillus subtilis (strain 168).